The following is a 327-amino-acid chain: MPTKMRTTRNLLLMATLLGSALFARAAEKEMTIGAIYLDTQGYYAGVRQGVQDAAKDSSVQVQLIETNAQGDISKESTFVDTLVARNVDAIILSAVSENGSSRTVRRASEAGIPVICYNTCINQKGVDKYVSAYLVGDPLEFGKKLGNAAADYFIANKIDQPKIAVINCEAFEVCVQRRKGFEEVLKSRVPGAQIVANQEGTVLDKAISVGEKLIISTPDLNAIMGESGGATLGAVKAVRNQNQAGKIAVFGSDMTTEIAQELENNQVLKAVVDISGKKMGNAVFAQTLKVINKQADGEKVIQVPIDLYTKTEDGKQWLATHVDGLP.

A signal peptide spans 1–26; sequence MPTKMRTTRNLLLMATLLGSALFARA.

It belongs to the bacterial solute-binding protein 2 family.

The protein resides in the periplasm. Its function is as follows. Probably part of the binding-protein-dependent transport system YphDEF. In Escherichia coli (strain K12), this protein is ABC transporter periplasmic-binding protein YphF (yphF).